The following is a 422-amino-acid chain: UPF0229 protein SO_2883 (422 aa).

Positions S60–N111 are disordered. Residues G70–R90 are compositionally biased toward basic and acidic residues.

It belongs to the UPF0229 family.

The sequence is that of UPF0229 protein SO_2883 from Shewanella oneidensis (strain ATCC 700550 / JCM 31522 / CIP 106686 / LMG 19005 / NCIMB 14063 / MR-1).